The primary structure comprises 329 residues: MISKKVVLPLVFSAPFIFFFVLCIVVVMTISRENQVGDDFIGGGDGEYETVGIAPEVERFRAVFEKYARQEGVFDQVNIIMALTMQESGGRSLDIMQSSESIGLPPNSITDPERSIEVGIKHFKKVFKQAGGDVRLTLQAYNFGSGFIDYVKKNGGKYTKKLALDFSRLQAFKMGWKSYGDPSYVDHVMRYVKGSDKNVKPVKGSMDFYETVMKEALKYEGQPYAWGGSNPETGFDCSGLVQWSFAKAGITLPRTAQEQHGATKKISEKEATAGDLVFFGGTYEGKAITHVGIYVGNGRMFNSNDSGIQYSDLKSGYWRDHLVSFGRIK.

A signal peptide spans methionine 1–threonine 29. The tract at residues arginine 59–valine 192 is muramidase. Residues methionine 206 to lysine 329 form the NlpC/P60 domain. Cysteine 237 functions as the Nucleophile in the catalytic mechanism. Histidine 290 acts as the Proton acceptor in catalysis. Residue asparagine 302 is part of the active site.

Belongs to the peptidase C40 family.

It is found in the secreted. The enzyme catalyses Hydrolysis of (1-&gt;4)-beta-linkages between N-acetylmuramic acid and N-acetyl-D-glucosamine residues in a peptidoglycan and between N-acetyl-D-glucosamine residues in chitodextrins.. In terms of biological role, exhibits both muramidase and DL-endopeptidase activities. The N-terminal region acts as a N-acetylmuramidase, which cleaves the bond between N-acetylmuramic acid and N-acetyl-D-glucosamine (MurNAc-GlcNAc) in peptidoglycan. The C-terminal region acts as a DL-endopeptidase that cleaves the bond between D-gamma-glutamate and meso-diaminopimelic acid. Cannot degrade purified B.anthracis peptidoglycan, which differ from those of B.subtilis. CwlT is required for ICEBs1 conjugation: the muramidase activity is essential, whereas the peptidase activity is partially dispensable for transfer of ICEBs1. The protein is Bifunctional muramidase/DL-endopeptidase CwlT of Bacillus subtilis (strain 168).